Reading from the N-terminus, the 344-residue chain is Protease HtpX homolog (344 aa).

The next 3 helical transmembrane spans lie at 8-28 (VALG…ATVA), 46-66 (ALTG…FVLV), and 74-94 (VSFL…TYVA). Zn(2+) is bound at residue H172. E173 is an active-site residue. Residue H176 participates in Zn(2+) binding. The next 2 helical transmembrane spans lie at 183–203 (AIML…VTAV) and 220–240 (LAVG…VLAF). E245 contacts Zn(2+).

It belongs to the peptidase M48B family. Requires Zn(2+) as cofactor.

Its subcellular location is the cell membrane. The protein is Protease HtpX homolog of Pyrobaculum calidifontis (strain DSM 21063 / JCM 11548 / VA1).